The primary structure comprises 195 residues: Nicotinamide riboside kinase 1 (195 aa).

An ATP-binding site is contributed by 10–18 (GVTNGGKTT). Positions 17 and 36 each coordinate Mg(2+). D36 (proton acceptor) is an active-site residue. Residues 36–39 (DDFF) and 55–56 (YD) contribute to the substrate site. R128 is a binding site for ATP. Substrate-binding positions include R129 and 134 to 135 (YE). Residues 132–134 (RVY) and 172–174 (RSE) each bind ATP.

This sequence belongs to the uridine kinase family. NRK subfamily. In terms of assembly, monomer.

It carries out the reaction beta-nicotinamide D-riboside + ATP = beta-nicotinamide D-ribonucleotide + ADP + H(+). The catalysed reaction is beta-D-ribosylnicotinate + ATP = nicotinate beta-D-ribonucleotide + ADP + H(+). Its pathway is cofactor biosynthesis; NAD(+) biosynthesis. Catalyzes the phosphorylation of nicotinamide riboside (NR) and nicotinic acid riboside (NaR) to form nicotinamide mononucleotide (NMN) and nicotinic acid mononucleotide (NaMN). In Mus musculus (Mouse), this protein is Nicotinamide riboside kinase 1 (Nmrk1).